Reading from the N-terminus, the 216-residue chain is ATP-dependent dethiobiotin synthetase BioD (216 aa).

Residue 12–17 (NVGKTF) participates in ATP binding. A Mg(2+)-binding site is contributed by Thr16. Lys36 is an active-site residue. Ser40 is a substrate binding site. Residues Asp53, 110-113 (EGAG), and 170-171 (NQ) each bind ATP. Positions 53 and 110 each coordinate Mg(2+).

The protein belongs to the dethiobiotin synthetase family. As to quaternary structure, homodimer. Mg(2+) is required as a cofactor.

The protein resides in the cytoplasm. It catalyses the reaction (7R,8S)-7,8-diammoniononanoate + CO2 + ATP = (4R,5S)-dethiobiotin + ADP + phosphate + 3 H(+). It functions in the pathway cofactor biosynthesis; biotin biosynthesis; biotin from 7,8-diaminononanoate: step 1/2. Functionally, catalyzes a mechanistically unusual reaction, the ATP-dependent insertion of CO2 between the N7 and N8 nitrogen atoms of 7,8-diaminopelargonic acid (DAPA, also called 7,8-diammoniononanoate) to form a ureido ring. This is ATP-dependent dethiobiotin synthetase BioD from Vesicomyosocius okutanii subsp. Calyptogena okutanii (strain HA).